Here is an 821-residue protein sequence, read N- to C-terminus: Glycerol-3-phosphate acyltransferase (821 aa).

Residues 310–315 (CHRSHM) carry the HXXXXD motif motif.

Belongs to the GPAT/DAPAT family.

Its subcellular location is the cell membrane. It carries out the reaction sn-glycerol 3-phosphate + an acyl-CoA = a 1-acyl-sn-glycero-3-phosphate + CoA. It participates in phospholipid metabolism; CDP-diacylglycerol biosynthesis; CDP-diacylglycerol from sn-glycerol 3-phosphate: step 1/3. In Baumannia cicadellinicola subsp. Homalodisca coagulata, this protein is Glycerol-3-phosphate acyltransferase.